Here is a 334-residue protein sequence, read N- to C-terminus: Nucleoid-associated protein SG1574 (334 aa).

This sequence belongs to the YejK family.

It is found in the cytoplasm. Its subcellular location is the nucleoid. In Sodalis glossinidius (strain morsitans), this protein is Nucleoid-associated protein SG1574.